A 658-amino-acid polypeptide reads, in one-letter code: L-type lectin-domain containing receptor kinase V.4 (658 aa).

A signal peptide spans Met1 to Gly25. Residues Lys26–Phe248 form a legume-lectin like region. The Extracellular segment spans residues Lys26 to Leu280. Residues Asn66 and Asn196 are each glycosylated (N-linked (GlcNAc...) asparagine). The chain crosses the membrane as a helical span at residues Val281–Phe301. Residues Tyr302–Arg658 are Cytoplasmic-facing. A Protein kinase domain is found at Lys334–Val592. Residues Leu340–Val348 and Lys363 each bind ATP. Asp460 (proton acceptor) is an active-site residue.

In the C-terminal section; belongs to the protein kinase superfamily. Ser/Thr protein kinase family. This sequence in the N-terminal section; belongs to the leguminous lectin family.

It localises to the cell membrane. It catalyses the reaction L-seryl-[protein] + ATP = O-phospho-L-seryl-[protein] + ADP + H(+). It carries out the reaction L-threonyl-[protein] + ATP = O-phospho-L-threonyl-[protein] + ADP + H(+). Its function is as follows. Involved in resistance response to the pathogenic oomycetes Phytophthora infestans and Phytophthora capsici and to the pathogenic bacteria Pseudomonas syringae. This Arabidopsis thaliana (Mouse-ear cress) protein is L-type lectin-domain containing receptor kinase V.4.